A 317-amino-acid polypeptide reads, in one-letter code: Peptidyl-prolyl cis-trans isomerase CYP26-2, chloroplastic (317 aa).

A disordered region spans residues 1–37 (MMQPNAKLLSPSAKFLPSPIEPPQHNRRTTVGAPPSL). The region spanning 95–311 (FIDVSIDGEP…SKVVVTNCGL (217 aa)) is the PPIase cyclophilin-type domain.

It belongs to the cyclophilin-type PPIase family. In terms of tissue distribution, ubiquitous. Lower levels of expression in roots.

Its subcellular location is the plastid. It localises to the chloroplast thylakoid. It catalyses the reaction [protein]-peptidylproline (omega=180) = [protein]-peptidylproline (omega=0). PPIases accelerate the folding of proteins. It catalyzes the cis-trans isomerization of proline imidic peptide bonds in oligopeptides. This Arabidopsis thaliana (Mouse-ear cress) protein is Peptidyl-prolyl cis-trans isomerase CYP26-2, chloroplastic (CYP26-2).